The following is a 326-amino-acid chain: Putative ribose-phosphate pyrophosphokinase 2 (326 aa).

Residues 43 to 45 (DGE) and 102 to 103 (RQ) contribute to the ATP site. His136 is a Mg(2+) binding site. D-ribose 5-phosphate contacts are provided by residues Asp226 and 230-234 (NTGKT).

The protein belongs to the ribose-phosphate pyrophosphokinase family. Class I subfamily. In terms of assembly, homohexamer. Requires Mg(2+) as cofactor.

It is found in the cytoplasm. The catalysed reaction is D-ribose 5-phosphate + ATP = 5-phospho-alpha-D-ribose 1-diphosphate + AMP + H(+). The protein operates within metabolic intermediate biosynthesis; 5-phospho-alpha-D-ribose 1-diphosphate biosynthesis; 5-phospho-alpha-D-ribose 1-diphosphate from D-ribose 5-phosphate (route I): step 1/1. Functionally, involved in the biosynthesis of the central metabolite phospho-alpha-D-ribosyl-1-pyrophosphate (PRPP) via the transfer of pyrophosphoryl group from ATP to 1-hydroxyl of ribose-5-phosphate (Rib-5-P). The protein is Putative ribose-phosphate pyrophosphokinase 2 of Streptococcus mutans serotype c (strain ATCC 700610 / UA159).